The following is a 383-amino-acid chain: Photosynthetic reaction center cytochrome c subunit (383 aa).

The first 22 residues, 1-22 (MNLGKQLTLPAVAVVASVVLLG), serve as a signal peptide directing secretion. Cys23 is lipidated: N-palmitoyl cysteine. Residue Cys23 is the site of S-diacylglycerol cysteine attachment. Heme contacts are provided by Met94, Cys107, Cys110, His111, Met130, His144, Cys152, Cys155, His156, Met236, Cys247, Cys250, His251, Cys307, Cys310, and His311. Positions 335–383 (PAEAAPATEEAPAAEAEAVEAAPVEEAAPAPVEQAAAPVEDAAPAPQQL) are disordered.

As to quaternary structure, component of the photosynthetic reaction center composed of protein subunits L (PufL), M (PufM), H (PuhA) and cytochrome C (PufC). The reaction center interacts with light-harvesting antenna complex LH1. Binds 4 heme groups per subunit.

It localises to the cellular chromatophore membrane. The reaction center of purple bacteria contains a tightly bound cytochrome molecule which re-reduces the photo oxidized primary electron donor. In Allochromatium vinosum (strain ATCC 17899 / DSM 180 / NBRC 103801 / NCIMB 10441 / D) (Chromatium vinosum), this protein is Photosynthetic reaction center cytochrome c subunit (pufC).